Consider the following 745-residue polypeptide: Aminopeptidase NAALADL1 (745 aa).

Topologically, residues M1–I6 are cytoplasmic. Residues L7–I28 form a helical; Signal-anchor for type II membrane protein membrane-spanning segment. At P29–L745 the chain is on the extracellular side. N-linked (GlcNAc...) asparagine glycosylation is found at N128, N141, and N235. Ca(2+) is bound by residues T263 and L266. N-linked (GlcNAc...) asparagine glycans are attached at residues N279, N302, and N329. Residues C301 and C318 are joined by a disulfide bond. Residues H373 and D383 each contribute to the Zn(2+) site. Catalysis depends on E421, which acts as the Proton donor/acceptor. E422 contributes to the Zn(2+) binding site. Residues E430 and E433 each coordinate Ca(2+). Zn(2+) is bound at residue D450. N-linked (GlcNAc...) asparagine glycans are attached at residues N456 and N497. H550 is a binding site for Zn(2+). 2 N-linked (GlcNAc...) asparagine glycosylation sites follow: N593 and N620.

This sequence belongs to the peptidase M28 family. M28B subfamily. As to quaternary structure, homodimer. It depends on Zn(2+) as a cofactor. In terms of processing, N-glycosylated.

It is found in the apical cell membrane. Aminopeptidase with broad substrate specificity. Has lower activity with substrates that have Asp or Glu in the P2' position, or Pro in the P3' position. Lacks activity with substrates that have both Pro in the P3' position and Asp or Glu in the P2' position. Lacks carboxypeptidase activity. Lacks dipeptidyl-peptidase IV type activity. The polypeptide is Aminopeptidase NAALADL1 (Naaladl1) (Mus musculus (Mouse)).